A 37-amino-acid polypeptide reads, in one-letter code: Mu-agatoxin-Aa1f (37 aa).

4 cysteine pairs are disulfide-bonded: Cys-2–Cys-18, Cys-9–Cys-23, Cys-17–Cys-33, and Cys-25–Cys-31. At Asn-37 the chain carries Asparagine amide.

Belongs to the neurotoxin 07 (Beta/delta-agtx) family. 03 (aga-4) subfamily. Aga sub-subfamily. Expressed by the venom gland.

It localises to the secreted. Functionally, insecticidal neurotoxin that induces an irreversible spastic paralysis when injected into insects. Modifies presynaptic voltage-gated sodium channels (Nav), causing them to open at the normal resting potential of the nerve. This leads to spontaneous release of neurotransmitter and repetitive action potentials in motor neurons. The chain is Mu-agatoxin-Aa1f from Agelenopsis aperta (North American funnel-web spider).